The sequence spans 328 residues: ATP-dependent 6-phosphofructokinase (328 aa).

Gly11 contacts ATP. Residue 21-25 (RAAVR) coordinates ADP. ATP-binding positions include 72 to 73 (RS) and 102 to 105 (GNGT). Asn103 is a binding site for Mg(2+). A substrate-binding site is contributed by 126–128 (TID). Asp128 functions as the Proton acceptor in the catalytic mechanism. Arg155 is an ADP binding site. Residues Arg163 and 170–172 (MGR) each bind substrate. Residues 186–188 (GAE) and 214–216 (KAS) contribute to the ADP site. Residues Glu223, Arg247, and 253-256 (HVQR) contribute to the substrate site.

The protein belongs to the phosphofructokinase type A (PFKA) family. ATP-dependent PFK group I subfamily. Prokaryotic clade 'B1' sub-subfamily. In terms of assembly, homotetramer. Requires Mg(2+) as cofactor.

The protein localises to the cytoplasm. It catalyses the reaction beta-D-fructose 6-phosphate + ATP = beta-D-fructose 1,6-bisphosphate + ADP + H(+). The protein operates within carbohydrate degradation; glycolysis; D-glyceraldehyde 3-phosphate and glycerone phosphate from D-glucose: step 3/4. With respect to regulation, allosterically activated by ADP and other diphosphonucleosides, and allosterically inhibited by phosphoenolpyruvate. In terms of biological role, catalyzes the phosphorylation of D-fructose 6-phosphate to fructose 1,6-bisphosphate by ATP, the first committing step of glycolysis. The polypeptide is ATP-dependent 6-phosphofructokinase (Cytophaga hutchinsonii (strain ATCC 33406 / DSM 1761 / CIP 103989 / NBRC 15051 / NCIMB 9469 / D465)).